Consider the following 226-residue polypeptide: Large ribosomal subunit protein uL3 (226 aa).

Glutamine 160 bears the N5-methylglutamine mark.

The protein belongs to the universal ribosomal protein uL3 family. Part of the 50S ribosomal subunit. Forms a cluster with proteins L14 and L19. In terms of processing, methylated by PrmB.

Functionally, one of the primary rRNA binding proteins, it binds directly near the 3'-end of the 23S rRNA, where it nucleates assembly of the 50S subunit. In Leptothrix cholodnii (strain ATCC 51168 / LMG 8142 / SP-6) (Leptothrix discophora (strain SP-6)), this protein is Large ribosomal subunit protein uL3.